Here is a 267-residue protein sequence, read N- to C-terminus: Cell division control protein 11 (267 aa).

Positions 6 to 263 (QNRRFTIMAA…ENYRAAVLEG (258 aa)) constitute a Septin-type G domain. Positions 16 to 23 (GPRGSGKS) are G1 motif. GTP contacts are provided by residues 16-23 (GPRGSGKS), glycine 66, 146-154 (KSDGLSITE), and arginine 212. A G3 motif region spans residues 63–66 (DTPG). The segment at 145-148 (SKSD) is G4 motif.

The protein belongs to the TRAFAC class TrmE-Era-EngA-EngB-Septin-like GTPase superfamily. Septin GTPase family. In terms of assembly, component of the septin complex.

In terms of biological role, septins are GTPases involved in cytokinesis. The septins localize to the site of cleavage and act as a structural scaffold that recruits different components involved in diverse processes at specific stages during the cell cycle. Septins are also involved in cell morphogenesis, chitin deposition, cell cycle regulation, cell compartmentalization and spore wall formation. The polypeptide is Cell division control protein 11 (CDC11) (Encephalitozoon cuniculi (strain GB-M1) (Microsporidian parasite)).